The primary structure comprises 166 residues: 6,7-dimethyl-8-ribityllumazine synthase (166 aa).

5-amino-6-(D-ribitylamino)uracil is bound by residues phenylalanine 22, 56–58 (SME), and 80–82 (AVI). Position 85–86 (85–86 (ET)) interacts with (2S)-2-hydroxy-3-oxobutyl phosphate. The active-site Proton donor is the histidine 88. Phenylalanine 113 is a 5-amino-6-(D-ribitylamino)uracil binding site. Residue arginine 127 participates in (2S)-2-hydroxy-3-oxobutyl phosphate binding.

This sequence belongs to the DMRL synthase family.

The catalysed reaction is (2S)-2-hydroxy-3-oxobutyl phosphate + 5-amino-6-(D-ribitylamino)uracil = 6,7-dimethyl-8-(1-D-ribityl)lumazine + phosphate + 2 H2O + H(+). It functions in the pathway cofactor biosynthesis; riboflavin biosynthesis; riboflavin from 2-hydroxy-3-oxobutyl phosphate and 5-amino-6-(D-ribitylamino)uracil: step 1/2. Its function is as follows. Catalyzes the formation of 6,7-dimethyl-8-ribityllumazine by condensation of 5-amino-6-(D-ribitylamino)uracil with 3,4-dihydroxy-2-butanone 4-phosphate. This is the penultimate step in the biosynthesis of riboflavin. This chain is 6,7-dimethyl-8-ribityllumazine synthase, found in Thermotoga neapolitana (strain ATCC 49049 / DSM 4359 / NBRC 107923 / NS-E).